Consider the following 385-residue polypeptide: cAMP-dependent protein kinase regulatory subunit (385 aa).

Polar residues predominate over residues 1–22 (MSSTGFTSPFGNANPFGSSGRS). 2 disordered regions span residues 1 to 51 (MSST…GVKN) and 77 to 111 (DFPA…PVHP). The tract at residues 1–128 (MSSTGFTSPF…RLKKAISGNF (128 aa)) is dimerization and phosphorylation. A Phosphoserine modification is found at Ser89. Residues 129–260 (LFNH…EEVP), Glu207, Arg216, 261–378 (ILKT…EAEE), Glu328, and Arg337 contribute to the 3',5'-cyclic AMP site.

It belongs to the cAMP-dependent kinase regulatory chain family. In terms of assembly, tetramer, composed of 2 regulatory (R) and 2 catalytic (C) subunits. In the presence of cAMP it dissociates into 2 active monomeric C subunits and an R dimer.

The protein is cAMP-dependent protein kinase regulatory subunit (mcb) of Neurospora crassa (strain ATCC 24698 / 74-OR23-1A / CBS 708.71 / DSM 1257 / FGSC 987).